We begin with the raw amino-acid sequence, 350 residues long: Uroporphyrinogen decarboxylase (350 aa).

Residues 27-31 (RQAGR), Phe-46, Asp-76, Tyr-152, Ser-207, and His-321 contribute to the substrate site.

It belongs to the uroporphyrinogen decarboxylase family. As to quaternary structure, homodimer.

It is found in the cytoplasm. It carries out the reaction uroporphyrinogen III + 4 H(+) = coproporphyrinogen III + 4 CO2. It functions in the pathway porphyrin-containing compound metabolism; protoporphyrin-IX biosynthesis; coproporphyrinogen-III from 5-aminolevulinate: step 4/4. In terms of biological role, catalyzes the decarboxylation of four acetate groups of uroporphyrinogen-III to yield coproporphyrinogen-III. The chain is Uroporphyrinogen decarboxylase from Listeria innocua serovar 6a (strain ATCC BAA-680 / CLIP 11262).